The primary structure comprises 530 residues: MSSLRPDEARKLATAASVSPLSNCQFCGVVISSIADEQKLEFTNKYKGSCTLLCSYDSQGVVLRVVSDDDRSHVLKEYMIAADTDAAQMGRRSYAVSLDADNLVLRFGSEQDQQLFRKVVENVKHLRPKSVFSQRTEESSASQYFQFYGYLSQQQNMMQDYVRTSTYQRAILGNAVDFQDKIVLDVGAGSGILSFFAVQAGAAKVYAIEASNMAQYAQQLVESNNVQHKISVIPGKIEEIELPEKVDVIISEPMGYMLYNERMLETYLHARKWLKPQGKMYPTHGDLHIAPFSDESLYSEQYNKANFWYQSAFHGVDLTTLHKEGMKEYFRQPIVDTFDIRICMAKSVRHVCDFLNDKEDDLHLISIPLEFHILQTGICHGLAFWFDVEFSGSSQNVWLSTSPTAPLTHWYQVRCLLPMPIFIKQGQTLTGRVLLEANRRQSYDVTIDLHIEGTLISSSNTLDLKNPYFRYTGAPVQAPPGTSTQSPSEQYWTQVDTQGSRNSSSMLNGGLSVNGIGDGMDITHGLMHPH.

The 310-residue stretch at 141-450 (ASQYFQFYGY…QSYDVTIDLH (310 aa)) folds into the SAM-dependent MTase PRMT-type domain. The S-adenosyl-L-methionine site is built by Q154, R163, G187, E209, E238, and T266. R501 is subject to Asymmetric dimethylarginine; by autocatalysis.

It belongs to the class I-like SAM-binding methyltransferase superfamily. Protein arginine N-methyltransferase family. In terms of assembly, homodimer. Post-translationally, the dimethylated protein is the major form.

It localises to the cytoplasm. The protein localises to the nucleus. The enzyme catalyses L-arginyl-[protein] + 2 S-adenosyl-L-methionine = N(omega),N(omega)-dimethyl-L-arginyl-[protein] + 2 S-adenosyl-L-homocysteine + 2 H(+). Functionally, methylates (mono- and asymmetric dimethylation) the guanidino nitrogens of arginyl residues in proteins. May methylate histone H3 at 'Arg-17' and activate transcription via chromatin remodeling. This chain is Histone-arginine methyltransferase CARMER (Art4), found in Drosophila simulans (Fruit fly).